An 89-amino-acid polypeptide reads, in one-letter code: Small ribosomal subunit protein uS15 (89 aa).

It belongs to the universal ribosomal protein uS15 family. Part of the 30S ribosomal subunit. Forms a bridge to the 50S subunit in the 70S ribosome, contacting the 23S rRNA.

In terms of biological role, one of the primary rRNA binding proteins, it binds directly to 16S rRNA where it helps nucleate assembly of the platform of the 30S subunit by binding and bridging several RNA helices of the 16S rRNA. Functionally, forms an intersubunit bridge (bridge B4) with the 23S rRNA of the 50S subunit in the ribosome. In Mycolicibacterium vanbaalenii (strain DSM 7251 / JCM 13017 / BCRC 16820 / KCTC 9966 / NRRL B-24157 / PYR-1) (Mycobacterium vanbaalenii), this protein is Small ribosomal subunit protein uS15.